Consider the following 396-residue polypeptide: Phosphoglycerate kinase (396 aa).

Substrate contacts are provided by residues 22–24 (DLN), arginine 37, 60–63 (HFGR), arginine 118, and arginine 151. ATP is bound by residues lysine 201, glutamate 323, and 353-356 (GGDT).

This sequence belongs to the phosphoglycerate kinase family. As to quaternary structure, monomer.

The protein localises to the cytoplasm. It carries out the reaction (2R)-3-phosphoglycerate + ATP = (2R)-3-phospho-glyceroyl phosphate + ADP. It functions in the pathway carbohydrate degradation; glycolysis; pyruvate from D-glyceraldehyde 3-phosphate: step 2/5. The sequence is that of Phosphoglycerate kinase from Xanthobacter autotrophicus (strain ATCC BAA-1158 / Py2).